Consider the following 189-residue polypeptide: Elongation factor P 2 (189 aa).

Belongs to the elongation factor P family.

The protein resides in the cytoplasm. Its pathway is protein biosynthesis; polypeptide chain elongation. Its function is as follows. Involved in peptide bond synthesis. Stimulates efficient translation and peptide-bond synthesis on native or reconstituted 70S ribosomes in vitro. Probably functions indirectly by altering the affinity of the ribosome for aminoacyl-tRNA, thus increasing their reactivity as acceptors for peptidyl transferase. This chain is Elongation factor P 2, found in Mesorhizobium japonicum (strain LMG 29417 / CECT 9101 / MAFF 303099) (Mesorhizobium loti (strain MAFF 303099)).